A 926-amino-acid chain; its full sequence is Thyroid peroxidase (926 aa).

An N-terminal signal peptide occupies residues M1–A14. Residues F19–R844 lie on the Extracellular side of the membrane. N129 carries an N-linked (GlcNAc...) asparagine glycan. A disulfide bridge links C142 with C158. D238 is a heme b binding site. H239 acts as the Proton acceptor in catalysis. Position 240 (D240) interacts with Ca(2+). 2 disulfide bridges follow: C259–C269 and C263–C286. Residues N277 and N307 are each glycosylated (N-linked (GlcNAc...) asparagine). Ca(2+) is bound by residues T321, F323, D325, and S327. An N-linked (GlcNAc...) asparagine glycan is attached at N342. The heme b site is built by E398 and H493. Cystine bridges form between C596–C653, C694–C719, C740–C780, C766–C792, C798–C812, C806–C821, and C823–C836. A Sushi domain is found at D738–K793. In terms of domain architecture, EGF-like; calcium-binding spans D794–V837. Residues A845–C869 form a helical membrane-spanning segment. The Cytoplasmic portion of the chain corresponds to R870–E926.

The protein belongs to the peroxidase family. XPO subfamily. In terms of assembly, interacts with DUOX1, DUOX2 and CYBA. Ca(2+) is required as a cofactor. Requires heme b as cofactor. Post-translationally, heme is covalently bound through a H(2)O(2)-dependent autocatalytic process. Heme insertion is important for the delivery of protein at the cell surface. In terms of processing, cleaved in its N-terminal part. N-glycosylated; contains mannose and N-acetylglucosamine.

The protein localises to the membrane. It carries out the reaction 2 iodide + H2O2 + 2 H(+) = diiodine + 2 H2O. The catalysed reaction is [thyroglobulin]-L-tyrosine + iodide + H2O2 + H(+) = [thyroglobulin]-3-iodo-L-tyrosine + 2 H2O. The enzyme catalyses [thyroglobulin]-3-iodo-L-tyrosine + iodide + H2O2 + H(+) = [thyroglobulin]-3,5-diiodo-L-tyrosine + 2 H2O. It catalyses the reaction 2 [thyroglobulin]-3,5-diiodo-L-tyrosine + H2O2 = [thyroglobulin]-L-thyroxine + [thyroglobulin]-dehydroalanine + 2 H2O. It carries out the reaction [thyroglobulin]-3-iodo-L-tyrosine + [thyroglobulin]-3,5-diiodo-L-tyrosine + H2O2 = [thyroglobulin]-3,3',5-triiodo-L-thyronine + [thyroglobulin]-dehydroalanine + 2 H2O. It functions in the pathway hormone biosynthesis; thyroid hormone biosynthesis. Iodination and coupling of the hormonogenic tyrosines in thyroglobulin to yield the thyroid hormones T(3) and T(4). The polypeptide is Thyroid peroxidase (TPO) (Sus scrofa (Pig)).